The sequence spans 93 residues: Em protein H5 (93 aa).

Residues 1-93 (MASGQQERSE…IDESKFKTKS (93 aa)) are disordered. 3 stretches are compositionally biased toward basic and acidic residues: residues 7–19 (ERSE…REGE), 32–62 (EAQE…EMGR), and 73–93 (GGER…KTKS).

This sequence belongs to the small hydrophilic plant seed protein family.

In terms of biological role, it is thought to provide protection for the cytoplasm during the desiccation stage of embryo development. The polypeptide is Em protein H5 (EMH5) (Triticum aestivum (Wheat)).